A 142-amino-acid polypeptide reads, in one-letter code: MTLTQAEKAAVITIWTKVATQADAIGAESLERLFSSYPQTKTYFPHFDLSQGSTQLRGHGSKVMNAIGEAVKNIDDIRGALAKLSELHAYILRVDPVNFKLLCHCILCSVAARYPSDFTPEVHAAWDKFLSSVSSVLTEKYR.

Residues 2–142 enclose the Globin domain; that stretch reads TLTQAEKAAV…VSSVLTEKYR (141 aa). Heme b is bound by residues H59 and H88.

Belongs to the globin family.

In terms of biological role, the pi' chain is the counterpart of the alpha chain in the major early embryonic hemoglobin P. The polypeptide is Hemoglobin subunit pi (Cairina moschata (Muscovy duck)).